A 349-amino-acid polypeptide reads, in one-letter code: Hydroxymethylglutaryl-CoA synthase (349 aa).

Asp-29 and Ala-30 together coordinate (3S)-3-hydroxy-3-methylglutaryl-CoA. Catalysis depends on Glu-81, which acts as the Proton donor/acceptor. (3S)-3-hydroxy-3-methylglutaryl-CoA-binding residues include Cys-113 and Thr-154. The Acyl-thioester intermediate role is filled by Cys-113. A CoA-binding site is contributed by Arg-202. 2 residues coordinate (3S)-3-hydroxy-3-methylglutaryl-CoA: Thr-204 and His-237. The active-site Proton donor/acceptor is the His-237. Lys-242 is a binding site for CoA. Lys-246, Asn-269, and Ser-299 together coordinate (3S)-3-hydroxy-3-methylglutaryl-CoA.

Belongs to the thiolase-like superfamily. Archaeal HMG-CoA synthase family. Interacts with acetoacetyl-CoA thiolase that catalyzes the precedent step in the pathway and with a DUF35 protein. The acetoacetyl-CoA thiolase/HMG-CoA synthase complex channels the intermediate via a fused CoA-binding site, which allows for efficient coupling of the endergonic thiolase reaction with the exergonic HMGCS reaction.

It carries out the reaction acetoacetyl-CoA + acetyl-CoA + H2O = (3S)-3-hydroxy-3-methylglutaryl-CoA + CoA + H(+). It functions in the pathway metabolic intermediate biosynthesis; (R)-mevalonate biosynthesis; (R)-mevalonate from acetyl-CoA: step 2/3. In terms of biological role, catalyzes the condensation of acetyl-CoA with acetoacetyl-CoA to form 3-hydroxy-3-methylglutaryl-CoA (HMG-CoA). Functions in the mevalonate (MVA) pathway leading to isopentenyl diphosphate (IPP), a key precursor for the biosynthesis of isoprenoid compounds that are building blocks of archaeal membrane lipids. The sequence is that of Hydroxymethylglutaryl-CoA synthase from Methanosarcina acetivorans (strain ATCC 35395 / DSM 2834 / JCM 12185 / C2A).